The sequence spans 2605 residues: Non-reducing polyketide synthase dbaI (2605 aa).

The segment at 97 to 243 (PNTLLIPLVM…PASEISDLHR (147 aa)) is N-terminal acylcarrier protein transacylase domain (SAT). Cys-144 functions as the Nucleophile; for transacylase activity in the catalytic mechanism. Residue His-262 is the Proton donor/acceptor; for transacylase activity of the active site. The 417-residue stretch at 382-798 (ENDIAVVGMS…GSNASIVVTQ (417 aa)) folds into the Ketosynthase family 3 (KS3) domain. Residues Cys-547, His-682, and His-721 each act as for beta-ketoacyl synthase activity in the active site. The tract at residues 908–1195 (FGGQVSTFVG…VTNMASRALG (288 aa)) is malonyl-CoA:ACP transacylase (MAT) domain. Residues 1285 to 1420 (PNTLLTFVGY…GRVIFRSISD (136 aa)) form an N-terminal hotdog fold region. The 312-residue stretch at 1285 to 1596 (PNTLLTFVGY…YVKIPKASMS (312 aa)) folds into the PKS/mFAS DH domain. The interval 1316–1594 (LIRGHIIAQT…ISYVKIPKAS (279 aa)) is product template (PT) domain. Residue His-1320 is the Proton acceptor; for dehydratase activity of the active site. The tract at residues 1447–1596 (EVDEVLQNRN…YVKIPKASMS (150 aa)) is C-terminal hotdog fold. Asp-1504 acts as the Proton donor; for dehydratase activity in catalysis. The 75-residue stretch at 1665–1739 (GQLTQRIKSI…SLIKCVRKAM (75 aa)) folds into the Carrier domain. Ser-1699 carries the post-translational modification O-(pantetheine 4'-phosphoryl)serine. The interval 1742 to 1780 (DADSAEYTTEQSTSEAADSDDKSTNYTTPSTPGEEALDM) is disordered. Polar residues predominate over residues 1747–1757 (EYTTEQSTSEA). The interval 1963–2151 (DWPLNRLFYR…VGYGHVDWTD (189 aa)) is methyltransferase domain. Positions 2230-2473 (VTGATGSLGC…LSWTPVDVVA (244 aa)) are NADPH-binding (R) domain.

The enzyme catalyses 4 malonyl-CoA + acetyl-CoA + AH2 + S-adenosyl-L-methionine + 3 H(+) = 2,4-dihydroxy-3-methyl-6-(2-oxopropyl)benzaldehyde + A + S-adenosyl-L-homocysteine + 4 CO2 + 5 CoA + H2O. It participates in secondary metabolite biosynthesis. In terms of biological role, non-reducing polyketide synthase; part of the gene cluster that mediates the biosynthesis of the antibiotic 2,4-dihydroxy-3-methyl-6-(2-oxopropyl)benzaldehyde (DHMBA) and its derivatives. The direct non-reducing polyketide synthase dbaI product is 2,4-dihydroxy-3-methyl-6-(2-oxopropyl)benzaldehyde (DHMBA), produced by condensation of one acetyl-CoA starter unit with 4 malonyl-CoA units and one methylation step. The FAD-dependent monooxygenase dbaH is responsible for the synthesis of yellow pigments derived from the oxidation of DHMBA. The roles of dbaB, C, E and F have still to be determined. The protein is Non-reducing polyketide synthase dbaI of Emericella nidulans (strain FGSC A4 / ATCC 38163 / CBS 112.46 / NRRL 194 / M139) (Aspergillus nidulans).